A 195-amino-acid polypeptide reads, in one-letter code: Probable nicotinate-nucleotide adenylyltransferase (195 aa).

It belongs to the NadD family.

It catalyses the reaction nicotinate beta-D-ribonucleotide + ATP + H(+) = deamido-NAD(+) + diphosphate. It participates in cofactor biosynthesis; NAD(+) biosynthesis; deamido-NAD(+) from nicotinate D-ribonucleotide: step 1/1. In terms of biological role, catalyzes the reversible adenylation of nicotinate mononucleotide (NaMN) to nicotinic acid adenine dinucleotide (NaAD). The chain is Probable nicotinate-nucleotide adenylyltransferase from Salinibacter ruber (strain DSM 13855 / M31).